Consider the following 123-residue polypeptide: UPF0738 protein Bcer98_0913 (123 aa).

The protein belongs to the UPF0738 family.

The sequence is that of UPF0738 protein Bcer98_0913 from Bacillus cytotoxicus (strain DSM 22905 / CIP 110041 / 391-98 / NVH 391-98).